Reading from the N-terminus, the 311-residue chain is MTMLGALTGRQLSSGLKDQFDRYNRMDILGEGTYGVVYRAVDRATGQIVALKKVRLDRTDEGIPQTALREVSILQEIHHPNIVNLLDVICADGKLYLIFEYVDHDLKKALEKRGGAFTGTTLKKIIYQLLEGLSFCHRHRIVHRDLKPANILVTTDNSVKIADFGLARAFQIPMHTYTHEVVTLWYRAPEILLGEKHYTPAVDMWSIGCIFAELARGKVLFRGDSEIGQLFEIFQVLGTPMDAEGSWLGVSSLPDYRDVFPKWSGKPLTQVLPTLDGDAVDLLSQMLRYNPAERISAKAALQHPWFSDAMF.

Residues 23-306 enclose the Protein kinase domain; sequence YNRMDILGEG…AKAALQHPWF (284 aa). Residues 29–37 and Lys-52 each bind ATP; that span reads LGEGTYGVV. Thr-33 bears the Phosphothreonine mark. Residue Tyr-34 is modified to Phosphotyrosine. Residue Asp-145 is the Proton acceptor of the active site.

This sequence belongs to the protein kinase superfamily. CMGC Ser/Thr protein kinase family. CDC2/CDKX subfamily. Forms a stable but non-covalent complex with a regulatory subunit and with a cyclin.

It carries out the reaction L-seryl-[protein] + ATP = O-phospho-L-seryl-[protein] + ADP + H(+). The enzyme catalyses L-threonyl-[protein] + ATP = O-phospho-L-threonyl-[protein] + ADP + H(+). Phosphorylation at Thr-33 or Tyr-34 inactivates the enzyme. Functionally, probably involved in the control of the cell cycle. The protein is Cell division control protein 2 homolog 3 (CRK3) of Trypanosoma brucei brucei.